We begin with the raw amino-acid sequence, 253 residues long: 5'-nucleotidase SurE (253 aa).

The a divalent metal cation site is built by Asp8, Asp9, Ser39, and Asn92.

Belongs to the SurE nucleotidase family. Requires a divalent metal cation as cofactor.

Its subcellular location is the cytoplasm. It carries out the reaction a ribonucleoside 5'-phosphate + H2O = a ribonucleoside + phosphate. In terms of biological role, nucleotidase that shows phosphatase activity on nucleoside 5'-monophosphates. This Burkholderia pseudomallei (strain 1710b) protein is 5'-nucleotidase SurE.